Consider the following 94-residue polypeptide: Co-chaperonin GroES (94 aa).

This sequence belongs to the GroES chaperonin family. As to quaternary structure, heptamer of 7 subunits arranged in a ring. Interacts with the chaperonin GroEL.

The protein resides in the cytoplasm. Functionally, together with the chaperonin GroEL, plays an essential role in assisting protein folding. The GroEL-GroES system forms a nano-cage that allows encapsulation of the non-native substrate proteins and provides a physical environment optimized to promote and accelerate protein folding. GroES binds to the apical surface of the GroEL ring, thereby capping the opening of the GroEL channel. The chain is Co-chaperonin GroES from Staphylococcus aureus (strain Mu50 / ATCC 700699).